A 379-amino-acid polypeptide reads, in one-letter code: L-lactate dehydrogenase (379 aa).

The FMN hydroxy acid dehydrogenase domain maps to 1–379; it reads MIISASTDYR…ITSDLLVKER (379 aa). A substrate-binding site is contributed by Tyr24. 2 residues coordinate FMN: Ser106 and Gln127. Tyr129 serves as a coordination point for substrate. Residue Thr155 coordinates FMN. Arg164 lines the substrate pocket. Residue Lys251 participates in FMN binding. His275 functions as the Proton acceptor in the catalytic mechanism. Position 278 (Arg278) interacts with substrate. An FMN-binding site is contributed by 306-330; it reads DSGIRTGLDVVRMLALGADTVLLGR.

Belongs to the FMN-dependent alpha-hydroxy acid dehydrogenase family. As to quaternary structure, homotetramer. It depends on FMN as a cofactor.

The protein resides in the cell inner membrane. It carries out the reaction (S)-lactate + A = pyruvate + AH2. Its function is as follows. Catalyzes the conversion of L-lactate to pyruvate. Is coupled to the respiratory chain. This is L-lactate dehydrogenase from Ectopseudomonas mendocina (strain ymp) (Pseudomonas mendocina).